The sequence spans 295 residues: tRNA-cytidine(32) 2-sulfurtransferase (295 aa).

The PP-loop motif motif lies at 63-68 (SGGKDS). Residues Cys138, Cys141, and Cys229 each coordinate [4Fe-4S] cluster.

It belongs to the TtcA family. As to quaternary structure, homodimer. Mg(2+) is required as a cofactor. It depends on [4Fe-4S] cluster as a cofactor.

Its subcellular location is the cytoplasm. The enzyme catalyses cytidine(32) in tRNA + S-sulfanyl-L-cysteinyl-[cysteine desulfurase] + AH2 + ATP = 2-thiocytidine(32) in tRNA + L-cysteinyl-[cysteine desulfurase] + A + AMP + diphosphate + H(+). It functions in the pathway tRNA modification. Its function is as follows. Catalyzes the ATP-dependent 2-thiolation of cytidine in position 32 of tRNA, to form 2-thiocytidine (s(2)C32). The sulfur atoms are provided by the cysteine/cysteine desulfurase (IscS) system. This is tRNA-cytidine(32) 2-sulfurtransferase from Mesorhizobium japonicum (strain LMG 29417 / CECT 9101 / MAFF 303099) (Mesorhizobium loti (strain MAFF 303099)).